Here is a 225-residue protein sequence, read N- to C-terminus: Probable glutathione S-transferase (225 aa).

Residues 6–85 (EDVKLLGIVG…YIDETWKNNP (80 aa)) enclose the GST N-terminal domain. Glutathione-binding positions include Ser16, Lys43, Val57, and 69–70 (ES). Positions 90–214 (DPYQRALARF…PPRDPLFAYF (125 aa)) constitute a GST C-terminal domain.

It belongs to the GST superfamily. HSP26 family.

The catalysed reaction is RX + glutathione = an S-substituted glutathione + a halide anion + H(+). Its function is as follows. May play a role in the cellular response to stress. In Glycine max (Soybean), this protein is Probable glutathione S-transferase (HSP26-A).